Consider the following 142-residue polypeptide: Hemoglobin subunit alpha-1 (142 aa).

The Globin domain occupies 2-142 (VLSPADKTNI…VSTVLTSKYR (141 aa)). Histidine 59 serves as a coordination point for O2. Histidine 88 contacts heme b.

It belongs to the globin family. As to quaternary structure, heterotetramer of two alpha chains and two beta chains. As to expression, red blood cells.

Functionally, involved in oxygen transport from the lung to the various peripheral tissues. This Arctocephalus galapagoensis (Galapagoes fur seal) protein is Hemoglobin subunit alpha-1.